The primary structure comprises 173 residues: Putative metal-dependent hydrolase BCG9842_B2589 (173 aa).

3 residues coordinate Zn(2+): His65, His156, and His160.

It belongs to the metal hydrolase YfiT family. As to quaternary structure, homodimer. The cofactor is Zn(2+).

The protein localises to the cytoplasm. Possible metal-dependent hydrolase. The sequence is that of Putative metal-dependent hydrolase BCG9842_B2589 from Bacillus cereus (strain G9842).